Reading from the N-terminus, the 340-residue chain is Guanine nucleotide-binding protein G(I)/G(S)/G(T) subunit beta-3 (340 aa).

WD repeat units lie at residues 53–83 (GHLAKIYAMHWATDSKLLVSASQDGKLIVWD), 95–125 (LRSSWVMTCAYAPSGNFVACGGLDNMCSIYN), 141–170 (AHTGYLSCCRFLDDNNIVTSSGDTTCALWD), 182–212 (GHTGDCMSLAVSPDFNLFISGACDASAKLWD), 224–254 (GHESDINAICFFPNGEAICTGSDDASCRLFD), 268–298 (SIICGITSVAFSLSGRLLFAGYDDFNCNVWD), and 310–340 (GHDNRVSCLGVTADGMAVATGSWDSFLKIWN).

Belongs to the WD repeat G protein beta family. As to quaternary structure, g proteins are composed of 3 units, alpha, beta and gamma. Interacts with RASD2.

Its function is as follows. Guanine nucleotide-binding proteins (G proteins) are involved as a modulator or transducer in various transmembrane signaling systems. The beta and gamma chains are required for the GTPase activity, for replacement of GDP by GTP, and for G protein-effector interaction. This is Guanine nucleotide-binding protein G(I)/G(S)/G(T) subunit beta-3 (GNB3) from Homo sapiens (Human).